A 211-amino-acid polypeptide reads, in one-letter code: Probable GTP-binding protein EngB (211 aa).

The EngB-type G domain occupies 21 to 205; that stretch reads LMATIVFVGR…KNRIYEIIRE (185 aa). Residues 29-36, 54-58, 71-74, 151-154, and 184-186 contribute to the GTP site; these read GRSNVGKS, GVTRK, DMPG, NKLD, and ISA. The Mg(2+) site is built by serine 36 and threonine 56.

The protein belongs to the TRAFAC class TrmE-Era-EngA-EngB-Septin-like GTPase superfamily. EngB GTPase family. Requires Mg(2+) as cofactor.

Its function is as follows. Necessary for normal cell division and for the maintenance of normal septation. The chain is Probable GTP-binding protein EngB from Pyrococcus abyssi (strain GE5 / Orsay).